The primary structure comprises 349 residues: 4-hydroxy-3-methylbut-2-en-1-yl diphosphate synthase (flavodoxin) (349 aa).

Residues Cys-264, Cys-267, Cys-299, and Glu-306 each contribute to the [4Fe-4S] cluster site.

It belongs to the IspG family. [4Fe-4S] cluster is required as a cofactor.

The catalysed reaction is (2E)-4-hydroxy-3-methylbut-2-enyl diphosphate + oxidized [flavodoxin] + H2O + 2 H(+) = 2-C-methyl-D-erythritol 2,4-cyclic diphosphate + reduced [flavodoxin]. It participates in isoprenoid biosynthesis; isopentenyl diphosphate biosynthesis via DXP pathway; isopentenyl diphosphate from 1-deoxy-D-xylulose 5-phosphate: step 5/6. Converts 2C-methyl-D-erythritol 2,4-cyclodiphosphate (ME-2,4cPP) into 1-hydroxy-2-methyl-2-(E)-butenyl 4-diphosphate. This is 4-hydroxy-3-methylbut-2-en-1-yl diphosphate synthase (flavodoxin) from Clostridium perfringens (strain 13 / Type A).